The following is a 416-amino-acid chain: Interleukin-1 receptor type 2 (416 aa).

A signal peptide spans 1 to 13; the sequence is MFILLVLVTGVSA. Residues 14–355 lie on the Extracellular side of the membrane; the sequence is FTTPAVVHTG…FQSLHTTVKE (342 aa). Ig-like C2-type domains are found at residues 29 to 136, 146 to 233, and 249 to 357; these read PVTS…LELK, PLVS…YNIT, and PVII…KEVS. 3 disulfides stabilise this stretch: Cys42/Cys128, Cys64/Cys120, and Cys164/Cys219. N-linked (GlcNAc...) asparagine glycans are attached at residues Asn124, Asn208, Asn231, and Asn289. The cysteines at positions 270 and 338 are disulfide-linked. Residues 356 to 381 traverse the membrane as a helical segment; the sequence is VSSTFSWGIALAPLSLIILVVGAIWI. Topologically, residues 382–416 are cytoplasmic; the sequence is RRRCKRQAGKTYGLTKLPTDNQDFPSSPNQIKEMK. Positions 396–416 are disordered; the sequence is TKLPTDNQDFPSSPNQIKEMK. Residues 399–416 are compositionally biased toward polar residues; it reads PTDNQDFPSSPNQIKEMK.

Belongs to the interleukin-1 receptor family. Associates with IL1RAP to form a non-signaling interleukin-1 receptor complex. Post-translationally, a soluble form (sIL1R2) can also be produced by proteolytic cleavage at the cell surface (shedding) involving a metalloproteinase.

Its subcellular location is the membrane. It is found in the cell membrane. It localises to the secreted. In terms of biological role, non-signaling receptor for IL1A, IL1B and IL1RN. Reduces IL1B activities. Serves as a decoy receptor by competitive binding to IL1B and preventing its binding to IL1R1. Also modulates cellular response through non-signaling association with IL1RAP after binding to IL1B. IL1R2 (membrane and secreted forms) preferentially binds IL1B and poorly IL1A and IL1RN. The secreted IL1R2 recruits secreted IL1RAP with high affinity; this complex formation may be the dominant mechanism for neutralization of IL1B by secreted/soluble receptors. The polypeptide is Interleukin-1 receptor type 2 (Il1r2) (Rattus norvegicus (Rat)).